A 314-amino-acid chain; its full sequence is Malate dehydrogenase (314 aa).

NAD(+) is bound by residues 11–16 (GSGNIG) and aspartate 35. Positions 84 and 90 each coordinate substrate. NAD(+)-binding positions include asparagine 97 and 120-122 (ITN). Residues asparagine 122 and arginine 153 each coordinate substrate. The active-site Proton acceptor is the histidine 177.

This sequence belongs to the LDH/MDH superfamily. MDH type 3 family.

The enzyme catalyses (S)-malate + NAD(+) = oxaloacetate + NADH + H(+). Functionally, catalyzes the reversible oxidation of malate to oxaloacetate. The sequence is that of Malate dehydrogenase from Rickettsia typhi (strain ATCC VR-144 / Wilmington).